The sequence spans 430 residues: Pyrroloquinoline quinone-dependent sugar dehydrogenase (430 aa).

Positions Met-1–Ala-23 are cleaved as a signal peptide. Asn-25 carries an N-linked (GlcNAc...) asparagine glycan. Arg-57 lines the pyrroloquinoline quinone pocket. Residues Asn-94 and Asn-147 are each glycosylated (N-linked (GlcNAc...) asparagine). His-153 is a pyrroloquinoline quinone binding site. N-linked (GlcNAc...) asparagine glycosylation is present at Asn-184. Pyrroloquinoline quinone is bound at residue Arg-220. The Ca(2+) site is built by Ser-240 and Asp-242. A disulfide bridge connects residues Cys-281 and Cys-316. Asn-306 carries an N-linked (GlcNAc...) asparagine glycan. Residue His-330 coordinates pyrroloquinoline quinone. Asn-341 carries N-linked (GlcNAc...) asparagine glycosylation. His-350 serves as a coordination point for pyrroloquinoline quinone. Cys-388 and Cys-392 are joined by a disulfide.

Belongs to the sugar dehydrogenase AA12 family. Ca(2+) serves as cofactor. Requires pyrroloquinoline quinone as cofactor.

The protein localises to the secreted. Pyrroloquinoline quinone (PPQ)-dependent oxidoreductase that catalyzes the oxidation of various sugars such as L-fucose. This chain is Pyrroloquinoline quinone-dependent sugar dehydrogenase, found in Hypocrea jecorina (strain QM6a) (Trichoderma reesei).